A 156-amino-acid chain; its full sequence is Endoribonuclease YbeY (156 aa).

Zn(2+)-binding residues include histidine 122, histidine 126, and histidine 132.

It belongs to the endoribonuclease YbeY family. Zn(2+) serves as cofactor.

Its subcellular location is the cytoplasm. In terms of biological role, single strand-specific metallo-endoribonuclease involved in late-stage 70S ribosome quality control and in maturation of the 3' terminus of the 16S rRNA. In Moorella thermoacetica (strain ATCC 39073 / JCM 9320), this protein is Endoribonuclease YbeY.